A 339-amino-acid polypeptide reads, in one-letter code: MYQLFRHGIFQMDAEKAHNFTIQCLKLAGNPLFQPILKSLIHAPKGFPKTVMGVNFPNPIGLAAGADKNGDAIDGFGALGFGFLELGTVTPVAQDGNAKPRQFRLIEAEGIINRNGFNNNGIDYLIENVKNARYKGVIGINIGKNKFTSLEQGKDDYIFCLNKAYNYAGYITVNISSPNTPDLRQLQYGDYFDDLLRSIKDRQAILANQYNKYVPIAVKIAPDLTESELVQIADTLVRHKMDGVIATNTTISRDTVTGMKNAEQQGGLSGKPLQHKSTEIIKRLHQELKGQIPIIGSGGIDGLQNAQEKIEAGAELLQVYSGLIYHGPKLVKELVKNIK.

FMN-binding positions include 64–68 and T88; that span reads AGADK. K68 is a substrate binding site. 113-117 serves as a coordination point for substrate; it reads NRNGF. 2 residues coordinate FMN: N141 and N174. N174 is a substrate binding site. S177 (nucleophile) is an active-site residue. Substrate is bound at residue N179. The FMN site is built by K219 and T247. 248–249 contacts substrate; sequence NT. FMN-binding positions include G270, G299, and 320–321; that span reads YS.

It belongs to the dihydroorotate dehydrogenase family. Type 2 subfamily. In terms of assembly, monomer. FMN is required as a cofactor.

The protein localises to the cell membrane. The catalysed reaction is (S)-dihydroorotate + a quinone = orotate + a quinol. It functions in the pathway pyrimidine metabolism; UMP biosynthesis via de novo pathway; orotate from (S)-dihydroorotate (quinone route): step 1/1. Catalyzes the conversion of dihydroorotate to orotate with quinone as electron acceptor. The protein is Dihydroorotate dehydrogenase (quinone) (pyrD) of Haemophilus influenzae (strain ATCC 51907 / DSM 11121 / KW20 / Rd).